Reading from the N-terminus, the 45-residue chain is Large ribosomal subunit protein bL34 (45 aa).

The segment at 1-45 (MTKRTFGGTSRKRKRVSGFRVRMRSHTGRRVIRTRRKRGRSRLAA) is disordered. Over residues 10–45 (SRKRKRVSGFRVRMRSHTGRRVIRTRRKRGRSRLAA) the composition is skewed to basic residues.

Belongs to the bacterial ribosomal protein bL34 family.

This is Large ribosomal subunit protein bL34 from Synechococcus sp. (strain CC9311).